A 144-amino-acid polypeptide reads, in one-letter code: Histone H3.1 (144 aa).

The segment at 1-45 is disordered; that stretch reads MARTKQSARKTTGGKAPRKQLSAKSARKGVSPASSAGAKKSRYRP. N6,N6,N6-trimethyllysine; alternate is present on K5. At K5 the chain carries N6,N6-dimethyllysine; alternate. Residues K5 and K10 each carry the N6-methyllysine; alternate modification. Residues K10, K15, K19, K24, K28, and K39 each carry the N6-acetyllysine; alternate modification. The residue at position 15 (K15) is an N6,N6-dimethyllysine; alternate. N6-methyllysine; alternate occurs at positions 19, 24, 28, and 39. An N6,N6,N6-trimethyllysine; alternate mark is found at K28 and K39. Residues K28 and K39 each carry the N6,N6-dimethyllysine; alternate modification. K58 bears the N6-acetyllysine mark.

It belongs to the histone H3 family. As to quaternary structure, the nucleosome is a histone octamer containing two molecules each of H2A, H2B, H3 and H4 assembled in one H3-H4 heterotetramer and two H2A-H2B heterodimers. The octamer wraps approximately 147 bp of DNA. Mono-, di- and trimethylated to form H3K4me1/2/3. H3K4me activates gene expression by regulating transcription elongation and plays a role in telomere length maintenance. H3K4me enrichment correlates with transcription levels, and occurs in a 5' to 3' gradient with H3K4me3 enrichment at the 5'-end of genes, shifting to H3K4me2 and then H3K4me1. H3K36me represses gene expression. In terms of processing, acetylation of histone H3 leads to transcriptional activation.

The protein resides in the nucleus. It is found in the chromosome. Core component of nucleosome. Nucleosomes wrap and compact DNA into chromatin, limiting DNA accessibility to the cellular machineries which require DNA as a template. Histones thereby play a central role in transcription regulation, DNA repair, DNA replication and chromosomal stability. DNA accessibility is regulated via a complex set of post-translational modifications of histones, also called histone code, and nucleosome remodeling. This is Histone H3.1 (HHT1) from Encephalitozoon cuniculi (strain GB-M1) (Microsporidian parasite).